The sequence spans 691 residues: Elongation factor G (691 aa).

Positions 8 to 282 constitute a tr-type G domain; the sequence is ERVRNIGIAA…AVIDYLPAPI (275 aa). Residues 17-24, 81-85, and 135-138 contribute to the GTP site; these read AHIDAGKT, DTPGH, and NKMD.

The protein belongs to the TRAFAC class translation factor GTPase superfamily. Classic translation factor GTPase family. EF-G/EF-2 subfamily.

It is found in the cytoplasm. In terms of biological role, catalyzes the GTP-dependent ribosomal translocation step during translation elongation. During this step, the ribosome changes from the pre-translocational (PRE) to the post-translocational (POST) state as the newly formed A-site-bound peptidyl-tRNA and P-site-bound deacylated tRNA move to the P and E sites, respectively. Catalyzes the coordinated movement of the two tRNA molecules, the mRNA and conformational changes in the ribosome. The polypeptide is Elongation factor G (Prochlorococcus marinus (strain SARG / CCMP1375 / SS120)).